Reading from the N-terminus, the 186-residue chain is ATP synthase subunit delta (186 aa).

This sequence belongs to the ATPase delta chain family. In terms of assembly, F-type ATPases have 2 components, F(1) - the catalytic core - and F(0) - the membrane proton channel. F(1) has five subunits: alpha(3), beta(3), gamma(1), delta(1), epsilon(1). F(0) has three main subunits: a(1), b(2) and c(10-14). The alpha and beta chains form an alternating ring which encloses part of the gamma chain. F(1) is attached to F(0) by a central stalk formed by the gamma and epsilon chains, while a peripheral stalk is formed by the delta and b chains.

The protein localises to the cell membrane. Functionally, f(1)F(0) ATP synthase produces ATP from ADP in the presence of a proton or sodium gradient. F-type ATPases consist of two structural domains, F(1) containing the extramembraneous catalytic core and F(0) containing the membrane proton channel, linked together by a central stalk and a peripheral stalk. During catalysis, ATP synthesis in the catalytic domain of F(1) is coupled via a rotary mechanism of the central stalk subunits to proton translocation. In terms of biological role, this protein is part of the stalk that links CF(0) to CF(1). It either transmits conformational changes from CF(0) to CF(1) or is implicated in proton conduction. This is ATP synthase subunit delta from Wolbachia pipientis wMel.